The chain runs to 101 residues: NAD(P)H-quinone oxidoreductase subunit 4L, chloroplastic (101 aa).

3 helical membrane passes run 2 to 22 (MLEH…YGLI), 32 to 52 (MCLE…SDLF), and 61 to 81 (IFSI…PAIV).

Belongs to the complex I subunit 4L family. As to quaternary structure, NDH is composed of at least 16 different subunits, 5 of which are encoded in the nucleus.

It is found in the plastid. Its subcellular location is the chloroplast thylakoid membrane. It catalyses the reaction a plastoquinone + NADH + (n+1) H(+)(in) = a plastoquinol + NAD(+) + n H(+)(out). It carries out the reaction a plastoquinone + NADPH + (n+1) H(+)(in) = a plastoquinol + NADP(+) + n H(+)(out). Its function is as follows. NDH shuttles electrons from NAD(P)H:plastoquinone, via FMN and iron-sulfur (Fe-S) centers, to quinones in the photosynthetic chain and possibly in a chloroplast respiratory chain. The immediate electron acceptor for the enzyme in this species is believed to be plastoquinone. Couples the redox reaction to proton translocation, and thus conserves the redox energy in a proton gradient. The chain is NAD(P)H-quinone oxidoreductase subunit 4L, chloroplastic from Chloranthus spicatus (Chulantree).